Reading from the N-terminus, the 199-residue chain is NAD(P)H-quinone oxidoreductase subunit 6, chloroplastic (199 aa).

5 helical membrane passes run 13–33 (AILLLIESGVILGSLGVVLFT), 35–55 (IVYSAFLLGWVPVCISFLYIL), 64–84 (VQILIYVGTINVLIVFAVMLI), 96–118 (WTVGDGTALALCTSPFLSIIAAI), and 157–177 (LPFELLSIILLVAPVGAITMA).

Belongs to the complex I subunit 6 family. In terms of assembly, NDH is composed of at least 16 different subunits, 5 of which are encoded in the nucleus.

Its subcellular location is the plastid. It is found in the chloroplast thylakoid membrane. It carries out the reaction a plastoquinone + NADH + (n+1) H(+)(in) = a plastoquinol + NAD(+) + n H(+)(out). It catalyses the reaction a plastoquinone + NADPH + (n+1) H(+)(in) = a plastoquinol + NADP(+) + n H(+)(out). In terms of biological role, NDH shuttles electrons from NAD(P)H:plastoquinone, via FMN and iron-sulfur (Fe-S) centers, to quinones in the photosynthetic chain and possibly in a chloroplast respiratory chain. The immediate electron acceptor for the enzyme in this species is believed to be plastoquinone. Couples the redox reaction to proton translocation, and thus conserves the redox energy in a proton gradient. This chain is NAD(P)H-quinone oxidoreductase subunit 6, chloroplastic (ndhG), found in Huperzia lucidula (Shining clubmoss).